Consider the following 216-residue polypeptide: Probable GH family 25 lysozyme 5 (216 aa).

A signal peptide spans 1-20; sequence MRFIISLLFVFTLIFNLAFS. Residues 21 to 216 form the Ch-type lysozyme domain; sequence HIGIDVSSGT…GLGIDKNYWE (196 aa). Asp-25 is a catalytic residue. N-linked (GlcNAc...) asparagine glycosylation is present at Asn-31. Active-site residues include Asp-113 and Glu-115.

The protein belongs to the glycosyl hydrolase 25 family.

Its subcellular location is the secreted. It carries out the reaction Hydrolysis of (1-&gt;4)-beta-linkages between N-acetylmuramic acid and N-acetyl-D-glucosamine residues in a peptidoglycan and between N-acetyl-D-glucosamine residues in chitodextrins.. This is Probable GH family 25 lysozyme 5 from Dictyostelium discoideum (Social amoeba).